A 381-amino-acid polypeptide reads, in one-letter code: MKRLLLVKYASEIFLKGLNKGKFEKKLKDNIKNILKDVQYNFVMDQGRWFIECSDIEKGIEKLKSVFGVWEICVVDEVEADMEKIKEQSLKNALESKGSTFKVLTKRADKSFPGTSMEVSREIGAYILQNVPNLSVDIKNPDFFVNIEIRNKAYVYSKKIKAVGGMPYGTNGNTLLMLSGGIDSPVAGYMMARRGVQLNCIYFHSHPYTSERAKEKVKELAGILKGYTGNINLYITPFTEIQMQIIEKCRKDELTIIMRRFMMRIACIIADKYNINSVTTGESIGQVASQTMEGLVVSNQAADRPVFRPLIAMDKVDIMEVAREIGTYETSILPYEDCCTIFVPKHPKTKPRLQEIIKSEENLDIDVLVEEAVCDTEFLSI.

Residues 57–160 form the THUMP domain; sequence EKGIEKLKSV…NKAYVYSKKI (104 aa). ATP-binding positions include 177 to 178, 202 to 203, arginine 259, glycine 281, and glutamine 290; these read ML and YF.

Belongs to the ThiI family.

It is found in the cytoplasm. The catalysed reaction is [ThiI sulfur-carrier protein]-S-sulfanyl-L-cysteine + a uridine in tRNA + 2 reduced [2Fe-2S]-[ferredoxin] + ATP + H(+) = [ThiI sulfur-carrier protein]-L-cysteine + a 4-thiouridine in tRNA + 2 oxidized [2Fe-2S]-[ferredoxin] + AMP + diphosphate. The enzyme catalyses [ThiS sulfur-carrier protein]-C-terminal Gly-Gly-AMP + S-sulfanyl-L-cysteinyl-[cysteine desulfurase] + AH2 = [ThiS sulfur-carrier protein]-C-terminal-Gly-aminoethanethioate + L-cysteinyl-[cysteine desulfurase] + A + AMP + 2 H(+). The protein operates within cofactor biosynthesis; thiamine diphosphate biosynthesis. In terms of biological role, catalyzes the ATP-dependent transfer of a sulfur to tRNA to produce 4-thiouridine in position 8 of tRNAs, which functions as a near-UV photosensor. Also catalyzes the transfer of sulfur to the sulfur carrier protein ThiS, forming ThiS-thiocarboxylate. This is a step in the synthesis of thiazole, in the thiamine biosynthesis pathway. The sulfur is donated as persulfide by IscS. The chain is Probable tRNA sulfurtransferase from Clostridium kluyveri (strain NBRC 12016).